A 356-amino-acid chain; its full sequence is Putative zinc finger protein At1g68190 (356 aa).

The Zn(2+) site is built by Cys14, Cys17, Cys37, His42, Cys57, Cys60, Cys80, and His85. Residues Cys14–Leu56 form a B box-type 1; atypical zinc finger. The segment at Cys57–Leu97 adopts a B box-type 2; atypical zinc-finger fold. Residues Glu159–Lys178 are disordered.

This sequence belongs to the CONSTANS family.

It is found in the nucleus. The polypeptide is Putative zinc finger protein At1g68190 (Arabidopsis thaliana (Mouse-ear cress)).